The primary structure comprises 296 residues: Homoserine kinase (296 aa).

86–96 (KAGSGLGSSAA) contributes to the ATP binding site.

Belongs to the GHMP kinase family. Homoserine kinase subfamily.

Its subcellular location is the cytoplasm. It carries out the reaction L-homoserine + ATP = O-phospho-L-homoserine + ADP + H(+). It participates in amino-acid biosynthesis; L-threonine biosynthesis; L-threonine from L-aspartate: step 4/5. Catalyzes the ATP-dependent phosphorylation of L-homoserine to L-homoserine phosphate. The polypeptide is Homoserine kinase (thrB) (Methanocaldococcus jannaschii (strain ATCC 43067 / DSM 2661 / JAL-1 / JCM 10045 / NBRC 100440) (Methanococcus jannaschii)).